The primary structure comprises 350 residues: Biotin synthase (350 aa).

Residues 54–278 (REIQLSTLLS…TMPQSYVRLS (225 aa)) enclose the Radical SAM core domain. 3 residues coordinate [4Fe-4S] cluster: Cys-69, Cys-73, and Cys-76. 4 residues coordinate [2Fe-2S] cluster: Cys-113, Cys-144, Cys-204, and Arg-276.

The protein belongs to the radical SAM superfamily. Biotin synthase family. As to quaternary structure, homodimer. The cofactor is [4Fe-4S] cluster. It depends on [2Fe-2S] cluster as a cofactor.

The catalysed reaction is (4R,5S)-dethiobiotin + (sulfur carrier)-SH + 2 reduced [2Fe-2S]-[ferredoxin] + 2 S-adenosyl-L-methionine = (sulfur carrier)-H + biotin + 2 5'-deoxyadenosine + 2 L-methionine + 2 oxidized [2Fe-2S]-[ferredoxin]. It participates in cofactor biosynthesis; biotin biosynthesis; biotin from 7,8-diaminononanoate: step 2/2. In terms of biological role, catalyzes the conversion of dethiobiotin (DTB) to biotin by the insertion of a sulfur atom into dethiobiotin via a radical-based mechanism. The chain is Biotin synthase from Neisseria meningitidis serogroup A / serotype 4A (strain DSM 15465 / Z2491).